The primary structure comprises 138 residues: Large-conductance mechanosensitive channel (138 aa).

Helical transmembrane passes span 10–30 and 76–96; these read FAMRGNVVDLAVGVIIGAAFG and GSFIQTIFDFVIVAFAIFLAI.

Belongs to the MscL family. Homopentamer.

It is found in the cell inner membrane. Channel that opens in response to stretch forces in the membrane lipid bilayer. May participate in the regulation of osmotic pressure changes within the cell. The protein is Large-conductance mechanosensitive channel of Serratia proteamaculans (strain 568).